The sequence spans 495 residues: Protein adenylyltransferase Fic (495 aa).

A disordered region spans residues 1–27; it reads MGTEAEQPSPPSPPAQQQEQTNPPLWN. Residues 36–55 form a helical membrane-spanning segment; it reads LYRLVLFFIAGSLAAWTIHA. 2 TPR repeats span residues 121–154 and 155–189; these read ALVS…APRH and PEVL…SPSN. An Inhibitory (S/T)XXXE(G/N) motif motif is present at residues 246–251; it reads SVGIEG. Residues Glu-250 and 331 to 334 contribute to the ATP site; that span reads VGGH. Residues 300-435 form the Fido domain; the sequence is ITIKDILELH…IRPFVRFIAD (136 aa). His-378 is an active-site residue. Residues 382–389, 414–415, and Asn-422 contribute to the ATP site; these read DGNGRTSR and YY.

It belongs to the fic family. In terms of assembly, homodimer.

Its subcellular location is the membrane. It catalyses the reaction L-tyrosyl-[protein] + ATP = O-(5'-adenylyl)-L-tyrosyl-[protein] + diphosphate. It carries out the reaction L-threonyl-[protein] + ATP = 3-O-(5'-adenylyl)-L-threonyl-[protein] + diphosphate. The catalysed reaction is 3-O-(5'-adenylyl)-L-threonyl-[protein] + H2O = L-threonyl-[protein] + AMP + H(+). The side chain of Glu-250 determines which of the two opposing activities (AMPylase or de-AMPylase) will take place. In response to endoplasmic reticulum stress, mediates de-AMPylase activity. Adenylyltransferase activity is inhibited by the inhibitory helix present at the N-terminus: Glu-250 binds ATP and competes with ATP-binding at Arg-389, thereby preventing adenylyltransferase activity. In unstressed cells, disengagement of Glu-250 promotes adenylyltransferase activity. Activation dissociates ATP-binding from Glu-250, allowing ordered binding of the entire ATP moiety with the alpha-phosphate in an orientation that is productive for accepting an incoming target hydroxyl side chain. In terms of biological role, protein that can both mediate the addition of adenosine 5'-monophosphate (AMP) to specific residues of target proteins (AMPylation), and the removal of the same modification from target proteins (de-AMPylation), depending on the context. The side chain of Glu-250 determines which of the two opposing activities (AMPylase or de-AMPylase) will take place. Acts as a key regulator of the unfolded protein response (UPR) by mediating AMPylation or de-AMPylation of Hsc70-3/BiP. In unstressed cells, acts as an adenylyltransferase by mediating AMPylation of Hsc70-3/BiP at 'Thr-518', thereby inactivating it. In response to endoplasmic reticulum stress, acts as a phosphodiesterase by mediating removal of ATP (de-AMPylation) from Hsc70-3/BiP at 'Thr-518', leading to restore HSPA5/BiP activity. This Drosophila yakuba (Fruit fly) protein is Protein adenylyltransferase Fic.